The primary structure comprises 510 residues: Hexose carrier protein HEX6 (510 aa).

Over 1 to 22 the chain is Cytoplasmic; the sequence is MAAGLAITSEGGQYNGRMTSFV. 12 helical membrane-spanning segments follow: residues 23–43, 83–103, 118–128, 140–160, 169–189, 202–222, 284–304, 325–345, 349–369, 382–402, 428–448, and 451–471; these read ALSC…IGVS, SFTS…SSVT, VFLAXAALGGA, VLLG…LSEM, INNG…LINY, ISLA…LFLP, LVMA…VIAF, IVTG…VDKL, ALFI…GSIM, GYAY…GWSW, AVSF…LCHF, and GIFF…HFLL. The Cytoplasmic portion of the chain corresponds to 472 to 510; that stretch reads PETKKVPIEKMDIVWRDHWFWKKIIGEEAAEENNKMEAA.

Belongs to the major facilitator superfamily. Sugar transporter (TC 2.A.1.1) family.

Its subcellular location is the membrane. Active uptake of hexoses. Probable glucose/hydrogen symport. This is Hexose carrier protein HEX6 (HEX6) from Ricinus communis (Castor bean).